The sequence spans 123 residues: PTS system glucitol/sorbitol-specific EIIA component (123 aa).

Residues 1-116 (MTVIYQTTIT…PDDIAPGSVL (116 aa)) form the PTS EIIA type-5 domain. His43 (tele-phosphohistidine intermediate) is an active-site residue. Residue His43 is modified to Phosphohistidine; by HPr.

Its subcellular location is the cytoplasm. In terms of biological role, the phosphoenolpyruvate-dependent sugar phosphotransferase system (sugar PTS), a major carbohydrate active transport system, catalyzes the phosphorylation of incoming sugar substrates concomitantly with their translocation across the cell membrane. The enzyme II complex composed of SrlA, SrlB and SrlE is involved in glucitol/sorbitol transport. In Shigella flexneri, this protein is PTS system glucitol/sorbitol-specific EIIA component (srlB).